The chain runs to 364 residues: Adenine deaminase (364 aa).

Zn(2+)-binding residues include His-25, His-27, and His-221. The Proton donor role is filled by Glu-224. Residue Asp-301 coordinates Zn(2+). A substrate-binding site is contributed by Asp-302.

The protein belongs to the metallo-dependent hydrolases superfamily. Adenosine and AMP deaminases family. Adenine deaminase type 2 subfamily. Zn(2+) serves as cofactor.

It is found in the cytoplasm. The protein resides in the nucleus. The catalysed reaction is adenine + H2O + H(+) = hypoxanthine + NH4(+). Its function is as follows. Catalyzes the hydrolytic deamination of adenine to hypoxanthine. Plays an important role in the purine salvage pathway and in nitrogen catabolism. Has no activity with adenosine as a substrate. The chain is Adenine deaminase (aah1) from Emericella nidulans (strain FGSC A4 / ATCC 38163 / CBS 112.46 / NRRL 194 / M139) (Aspergillus nidulans).